Here is a 295-residue protein sequence, read N- to C-terminus: Probable palmitoyltransferase ZDHHC24 (295 aa).

Over 1 to 20 the chain is Cytoplasmic; sequence MTSFMSRVWCKVESTGRQLP. The helical transmembrane segment at 21–41 threads the bilayer; sequence IVLNAVLVFSITAEVSYLVLV. The Extracellular portion of the chain corresponds to 42–60; sequence EAPFEPEQKKTDWSTIWTG. The helical transmembrane segment at 61-81 threads the bilayer; it reads LHLFAQYFMLGNITWNASLFV. Topologically, residues 82–151 are cytoplasmic; the sequence is KTNPSIRGVF…HNYRYFLTCL (70 aa). In terms of domain architecture, DHHC spans 102 to 152; the sequence is RYCYNCETHTPPRCSHCYDCNVCVLRRDHHCVFFGQCVGFHNYRYFLTCLL. Catalysis depends on cysteine 132, which acts as the S-palmitoyl cysteine intermediate. Residues 152–172 form a helical membrane-spanning segment; that stretch reads LFMWAGLLYAVVMNAEVFIFI. Over 173 to 176 the chain is Extracellular; it reads LKEG. A helical membrane pass occupies residues 177–197; it reads VTFHSVMLLLVPWIMLVSGQV. Topologically, residues 198 to 203 are cytoplasmic; sequence TTRAFA. Residues 204 to 224 traverse the membrane as a helical segment; sequence FAFIADTCVVGFLLVAAFLFF. Residues 225 to 295 lie on the Extracellular side of the membrane; it reads HVALMLRGQT…SLEPKKQAVH (71 aa).

It belongs to the DHHC palmitoyltransferase family.

The protein resides in the membrane. The enzyme catalyses L-cysteinyl-[protein] + hexadecanoyl-CoA = S-hexadecanoyl-L-cysteinyl-[protein] + CoA. Its function is as follows. Probable palmitoyltransferase that could catalyze the addition of palmitate onto various protein substrates. This chain is Probable palmitoyltransferase ZDHHC24, found in Danio rerio (Zebrafish).